Here is a 301-residue protein sequence, read N- to C-terminus: Ribonuclease HIII (301 aa).

In terms of domain architecture, RNase H type-2 spans 90–301 (TPHIGIDESG…LDAILGKVGK (212 aa)). Residues Asp96, Glu97, and Asp198 each coordinate a divalent metal cation.

The protein belongs to the RNase HII family. RnhC subfamily. Requires Mn(2+) as cofactor. Mg(2+) serves as cofactor.

Its subcellular location is the cytoplasm. It catalyses the reaction Endonucleolytic cleavage to 5'-phosphomonoester.. Functionally, endonuclease that specifically degrades the RNA of RNA-DNA hybrids. The chain is Ribonuclease HIII from Protochlamydia amoebophila (strain UWE25).